We begin with the raw amino-acid sequence, 156 residues long: Small ribosomal subunit protein uS7 (156 aa).

The protein belongs to the universal ribosomal protein uS7 family. As to quaternary structure, part of the 30S ribosomal subunit. Contacts proteins S9 and S11.

One of the primary rRNA binding proteins, it binds directly to 16S rRNA where it nucleates assembly of the head domain of the 30S subunit. Is located at the subunit interface close to the decoding center, probably blocks exit of the E-site tRNA. The polypeptide is Small ribosomal subunit protein uS7 (Acetivibrio thermocellus (strain ATCC 27405 / DSM 1237 / JCM 9322 / NBRC 103400 / NCIMB 10682 / NRRL B-4536 / VPI 7372) (Clostridium thermocellum)).